We begin with the raw amino-acid sequence, 90 residues long: uncharacterized protein (90 aa).

This is an uncharacterized protein from Mycobacterium tuberculosis (strain ATCC 25618 / H37Rv).